The primary structure comprises 291 residues: Malolactic fermentation system transcriptional activator (291 aa).

In terms of domain architecture, HTH lysR-type spans Met1–Asp60. Positions Phe20–Lys39 form a DNA-binding region, H-T-H motif.

This sequence belongs to the LysR transcriptional regulatory family.

The protein localises to the cytoplasm. Its function is as follows. Required for malolactic fermentation. It is most probably a transcriptional activator. This is Malolactic fermentation system transcriptional activator (mleR) from Lactococcus lactis subsp. lactis (strain IL1403) (Streptococcus lactis).